A 42-amino-acid polypeptide reads, in one-letter code: Photosystem I reaction center subunit IX (42 aa).

A helical membrane pass occupies residues 7–27 (YLSTAPVIATIWFGFLAGLLI).

The protein belongs to the PsaJ family.

It localises to the plastid. The protein localises to the chloroplast thylakoid membrane. May help in the organization of the PsaE and PsaF subunits. The sequence is that of Photosystem I reaction center subunit IX from Chaetosphaeridium globosum (Charophycean green alga).